The chain runs to 804 residues: Lon protease 2 (804 aa).

The Lon N-terminal domain occupies 19-216; that stretch reads VPILPLRNSV…LVLAMVGRQL (198 aa). An ATP-binding site is contributed by 367–374; that stretch reads GPPGVGKT. The Lon proteolytic domain maps to 603 to 784; sequence TLQPGVATGL…EEILPLVLEP (182 aa). Residues Ser690 and Lys733 contribute to the active site. The tract at residues 782 to 804 is disordered; the sequence is LEPPRRAPAQSASPEELEEQAGV.

Belongs to the peptidase S16 family. As to quaternary structure, homohexamer. Organized in a ring with a central cavity.

The protein resides in the cytoplasm. The enzyme catalyses Hydrolysis of proteins in presence of ATP.. ATP-dependent serine protease that mediates the selective degradation of mutant and abnormal proteins as well as certain short-lived regulatory proteins. Required for cellular homeostasis and for survival from DNA damage and developmental changes induced by stress. Degrades polypeptides processively to yield small peptide fragments that are 5 to 10 amino acids long. Binds to DNA in a double-stranded, site-specific manner. The sequence is that of Lon protease 2 from Sorangium cellulosum (strain So ce56) (Polyangium cellulosum (strain So ce56)).